The primary structure comprises 176 residues: Conjugal transfer protein TraF (176 aa).

The N-terminal stretch at 1–23 (MRHRRALLFLTGAAVFVSALTAA) is a signal peptide.

Belongs to the peptidase S26C family.

The protein localises to the periplasm. Its function is as follows. Involved in conjugal transfer of the plasmid. The sequence is that of Conjugal transfer protein TraF (traF) from Agrobacterium tumefaciens (strain 15955).